The sequence spans 399 residues: Elongation factor Tu (399 aa).

Residues 10–204 (KDHVNIGTIG…AVDDYIDTPE (195 aa)) form the tr-type G domain. Residues 19 to 26 (GHVDHGKT) form a G1 region. A GTP-binding site is contributed by 19-26 (GHVDHGKT). Thr-26 provides a ligand contact to Mg(2+). The tract at residues 60 to 64 (GITIN) is G2. Residues 81 to 84 (DCPG) form a G3 region. GTP-binding positions include 81–85 (DCPGH) and 136–139 (NKKD). The G4 stretch occupies residues 136 to 139 (NKKD). Positions 174–176 (SAL) are G5.

This sequence belongs to the TRAFAC class translation factor GTPase superfamily. Classic translation factor GTPase family. EF-Tu/EF-1A subfamily. As to quaternary structure, monomer.

The protein localises to the cytoplasm. It carries out the reaction GTP + H2O = GDP + phosphate + H(+). Functionally, GTP hydrolase that promotes the GTP-dependent binding of aminoacyl-tRNA to the A-site of ribosomes during protein biosynthesis. The sequence is that of Elongation factor Tu from Synechocystis sp. (strain ATCC 27184 / PCC 6803 / Kazusa).